The primary structure comprises 1123 residues: Leucine--tRNA ligase, cytoplasmic (1123 aa).

Positions 84–94 (PYMNGRLHAGH) match the 'HIGH' region motif. The 'KMSKS' region motif lies at 757 to 761 (KMSKS). Lysine 760 is an ATP binding site.

Belongs to the class-I aminoacyl-tRNA synthetase family.

It is found in the cytoplasm. The catalysed reaction is tRNA(Leu) + L-leucine + ATP = L-leucyl-tRNA(Leu) + AMP + diphosphate. This is Leucine--tRNA ligase, cytoplasmic (leu-6) from Neurospora crassa (strain ATCC 24698 / 74-OR23-1A / CBS 708.71 / DSM 1257 / FGSC 987).